Consider the following 236-residue polypeptide: Pyridoxine 5'-phosphate synthase (236 aa).

Position 6 (Asn6) interacts with 3-amino-2-oxopropyl phosphate. 8-9 (DH) lines the 1-deoxy-D-xylulose 5-phosphate pocket. Residue Arg17 participates in 3-amino-2-oxopropyl phosphate binding. His42 serves as the catalytic Proton acceptor. 1-deoxy-D-xylulose 5-phosphate contacts are provided by Arg44 and His49. Glu69 serves as the catalytic Proton acceptor. Thr99 is a 1-deoxy-D-xylulose 5-phosphate binding site. The active-site Proton donor is the His190. 3-amino-2-oxopropyl phosphate contacts are provided by residues Gly191 and 212-213 (GH).

The protein belongs to the PNP synthase family. Homooctamer; tetramer of dimers.

It localises to the cytoplasm. It catalyses the reaction 3-amino-2-oxopropyl phosphate + 1-deoxy-D-xylulose 5-phosphate = pyridoxine 5'-phosphate + phosphate + 2 H2O + H(+). Its pathway is cofactor biosynthesis; pyridoxine 5'-phosphate biosynthesis; pyridoxine 5'-phosphate from D-erythrose 4-phosphate: step 5/5. Functionally, catalyzes the complicated ring closure reaction between the two acyclic compounds 1-deoxy-D-xylulose-5-phosphate (DXP) and 3-amino-2-oxopropyl phosphate (1-amino-acetone-3-phosphate or AAP) to form pyridoxine 5'-phosphate (PNP) and inorganic phosphate. The chain is Pyridoxine 5'-phosphate synthase from Pelodictyon phaeoclathratiforme (strain DSM 5477 / BU-1).